Consider the following 283-residue polypeptide: MALPLAFLFTSPGPVLVEIGPITIRWYGLLIATAVLIGVSLSQYLAKRRQVNPDLLSDLSIWLVIGAIPAARIYYVLFQWSEYAQHPERIIAIWQGGIAIHGAIIGGTLAALIFAKLKRVPFWQLADLVAPSLILGQAIGRWGNFFNSEAFGRPTNLPWKLYIPIERRPPDLVSFEYFHPTFLYESIWDLMVFALLITLFFRSLAGKPRLKVGTLFMVYLATYSLGRLWIEGLRTDSLMLGPLRIAQVVSLTGIALGLAGLAWLYVRKRPLPDVVPSAKDTGE.

4 helical membrane-spanning segments follow: residues 19-39 (IGPITIRWYGLLIATAVLIGV), 59-79 (LSIWLVIGAIPAARIYYVLFQ), 90-110 (IIAIWQGGIAIHGAIIGGTLA), and 120-140 (VPFWQLADLVAPSLILGQAIG). Arginine 141 is a binding site for a 1,2-diacyl-sn-glycero-3-phospho-(1'-sn-glycerol). A run of 3 helical transmembrane segments spans residues 181 to 201 (TFLYESIWDLMVFALLITLFF), 212 to 232 (VGTLFMVYLATYSLGRLWIEG), and 245 to 265 (IAQVVSLTGIALGLAGLAWLY).

This sequence belongs to the Lgt family.

The protein localises to the cell inner membrane. It carries out the reaction L-cysteinyl-[prolipoprotein] + a 1,2-diacyl-sn-glycero-3-phospho-(1'-sn-glycerol) = an S-1,2-diacyl-sn-glyceryl-L-cysteinyl-[prolipoprotein] + sn-glycerol 1-phosphate + H(+). The protein operates within protein modification; lipoprotein biosynthesis (diacylglyceryl transfer). Its function is as follows. Catalyzes the transfer of the diacylglyceryl group from phosphatidylglycerol to the sulfhydryl group of the N-terminal cysteine of a prolipoprotein, the first step in the formation of mature lipoproteins. The protein is Phosphatidylglycerol--prolipoprotein diacylglyceryl transferase of Nostoc sp. (strain PCC 7120 / SAG 25.82 / UTEX 2576).